The primary structure comprises 266 residues: Signal peptidase I (266 aa).

The Cytoplasmic segment spans residues 1–20 (MQTDNTKSNTNKTAKQEWGS). Residues 21-41 (FAFVICIALLIRILIMEPFTV) traverse the membrane as a helical segment. The Periplasmic portion of the chain corresponds to 42 to 266 (PTGSMKATIL…IFRNLYNTDA (225 aa)). Active-site residues include Ser-45 and Lys-108.

The protein belongs to the peptidase S26 family.

The protein resides in the cell inner membrane. It carries out the reaction Cleavage of hydrophobic, N-terminal signal or leader sequences from secreted and periplasmic proteins.. Complements E.coli mutants temperature-sensitive for LepB function. The chain is Signal peptidase I (lepB) from Rickettsia rickettsii (strain Sheila Smith).